Consider the following 308-residue polypeptide: UDP-N-acetylenolpyruvoylglucosamine reductase (308 aa).

In terms of domain architecture, FAD-binding PCMH-type spans 22 to 185 (RVGGPADWLF…TEATFRAEAG (164 aa)). Arginine 165 is a catalytic residue. A compositionally biased stretch (basic and acidic residues) spans 197–211 (QIARRDSSQPTKERS). The tract at residues 197 to 228 (QIARRDSSQPTKERSAGSTFRNPAGFSSTGRA) is disordered. Residues 212 to 226 (AGSTFRNPAGFSSTG) are compositionally biased toward polar residues. Catalysis depends on serine 214, which acts as the Proton donor. Glutamate 296 is a catalytic residue.

The protein belongs to the MurB family. FAD is required as a cofactor.

The protein resides in the cytoplasm. The enzyme catalyses UDP-N-acetyl-alpha-D-muramate + NADP(+) = UDP-N-acetyl-3-O-(1-carboxyvinyl)-alpha-D-glucosamine + NADPH + H(+). It functions in the pathway cell wall biogenesis; peptidoglycan biosynthesis. In terms of biological role, cell wall formation. The chain is UDP-N-acetylenolpyruvoylglucosamine reductase from Cereibacter sphaeroides (strain ATCC 17029 / ATH 2.4.9) (Rhodobacter sphaeroides).